A 264-amino-acid chain; its full sequence is MSFLQEINLKLDVFEGPLDLLLHLIQKLEIDIYDIPITAVTEQYMSYIHAMQTLELEVAGEYLVMAATLMAIKSQMLLPKQELEIIDDEDFFEEEDPREALVAQLLEYRKFKYAATVLHEKEEERKLYYTKEPMDMDDYKEEDTTLPPNQINTIDLFLAFHAMLEKKKNRQPVETTVASDDVSIEEKISAISERMRQVQKGKAVSFDSFFDSYSKQEIVTTFMALLELMKTGAIYAEQENNYSEILLFNTETQQEDTTEVEETQ.

The protein belongs to the ScpA family. Component of a cohesin-like complex composed of ScpA, ScpB and the Smc homodimer, in which ScpA and ScpB bind to the head domain of Smc. The presence of the three proteins is required for the association of the complex with DNA.

The protein localises to the cytoplasm. In terms of biological role, participates in chromosomal partition during cell division. May act via the formation of a condensin-like complex containing Smc and ScpB that pull DNA away from mid-cell into both cell halves. This Enterococcus faecalis (strain ATCC 700802 / V583) protein is Segregation and condensation protein A.